The chain runs to 248 residues: Probable N-acetylglucosaminyl-phosphatidylinositol de-N-acetylase (248 aa).

The Lumenal segment spans residues 1-7 (MIWFWST). A helical membrane pass occupies residues 8–24 (LLVTAIAVLSTANESSS). Topologically, residues 25 to 248 (GQEKLAVESI…MSNNVLKRAT (224 aa)) are cytoplasmic.

This sequence belongs to the PIGL family.

Its subcellular location is the endoplasmic reticulum membrane. It carries out the reaction a 6-(N-acetyl-alpha-D-glucosaminyl)-1-(1,2-diacyl-sn-glycero-3-phospho)-1D-myo-inositol + H2O = a 6-(alpha-D-glucosaminyl)-1-(1,2-diacyl-sn-glycero-3-phospho)-1D-myo-inositol + acetate. Its pathway is glycolipid biosynthesis; glycosylphosphatidylinositol-anchor biosynthesis. Its function is as follows. Involved in the second step of GPI biosynthesis. De-N-acetylation of N-acetylglucosaminyl-phosphatidylinositol. The chain is Probable N-acetylglucosaminyl-phosphatidylinositol de-N-acetylase (gpi12) from Schizosaccharomyces pombe (strain 972 / ATCC 24843) (Fission yeast).